The chain runs to 239 residues: Purine nucleoside phosphorylase DeoD-type (239 aa).

H5 contributes to the a purine D-ribonucleoside binding site. Phosphate contacts are provided by residues G21, R25, R44, and 88 to 91 (RVGS). A purine D-ribonucleoside-binding positions include 180-182 (EME) and 204-205 (SD). The active-site Proton donor is the D205.

It belongs to the PNP/UDP phosphorylase family. In terms of assembly, homohexamer; trimer of homodimers.

The enzyme catalyses a purine D-ribonucleoside + phosphate = a purine nucleobase + alpha-D-ribose 1-phosphate. It carries out the reaction a purine 2'-deoxy-D-ribonucleoside + phosphate = a purine nucleobase + 2-deoxy-alpha-D-ribose 1-phosphate. In terms of biological role, catalyzes the reversible phosphorolytic breakdown of the N-glycosidic bond in the beta-(deoxy)ribonucleoside molecules, with the formation of the corresponding free purine bases and pentose-1-phosphate. The chain is Purine nucleoside phosphorylase DeoD-type from Salmonella choleraesuis (strain SC-B67).